Here is a 1392-residue protein sequence, read N- to C-terminus: L-2-aminoadipate reductase (1392 aa).

Lysine 541 is covalently cross-linked (Glycyl lysine isopeptide (Lys-Gly) (interchain with G-Cter in ubiquitin)). Residues 843 to 920 form the Carrier domain; that stretch reads SQFTNVEREV…AFAAEIDRIK (78 aa). Serine 880 carries the post-translational modification O-(pantetheine 4'-phosphoryl)serine. Lysine 1276 is covalently cross-linked (Glycyl lysine isopeptide (Lys-Gly) (interchain with G-Cter in ubiquitin)).

This sequence belongs to the ATP-dependent AMP-binding enzyme family. Requires pantetheine 4'-phosphate as cofactor.

It carries out the reaction (S)-2-amino-6-oxohexanoate + NADP(+) + H2O = L-2-aminoadipate + NADPH + 2 H(+). It catalyses the reaction (S)-2-amino-6-oxohexanoate + NAD(+) + H2O = L-2-aminoadipate + NADH + 2 H(+). The catalysed reaction is (S)-2-amino-6-oxohexanoate + AMP + diphosphate + NADP(+) = L-2-aminoadipate + ATP + NADPH + H(+). It participates in amino-acid biosynthesis; L-lysine biosynthesis via AAA pathway; L-lysine from L-alpha-aminoadipate (fungal route): step 1/3. Its function is as follows. Catalyzes the activation of alpha-aminoadipate by ATP-dependent adenylation and the reduction of activated alpha-aminoadipate by NADPH. The activated alpha-aminoadipate is bound to the phosphopantheinyl group of the enzyme itself before it is reduced to (S)-2-amino-6-oxohexanoate. The protein is L-2-aminoadipate reductase (LYS2) of Saccharomyces cerevisiae (strain ATCC 204508 / S288c) (Baker's yeast).